The following is a 163-amino-acid chain: uncharacterized protein (163 aa).

A helical transmembrane segment spans residues 11–31 (LSWFLLLVVVILIFFLLLSCL).

Its subcellular location is the membrane. This is an uncharacterized protein from Saccharomyces cerevisiae (strain ATCC 204508 / S288c) (Baker's yeast).